A 111-amino-acid polypeptide reads, in one-letter code: Ig kappa chain V-III region PC 3741/TEPC 111 (111 aa).

Residues 1–23 (DIVLTQSPASLAVSLGQRATISC) form a framework-1 region. Cysteines 23 and 92 form a disulfide. Residues 24–38 (RASESVDSYGNSFMH) are complementarity-determining-1. Residues 39-53 (WYQQKPGQPPKLLIY) are framework-2. Residues 54 to 60 (RASNLES) are complementarity-determining-2. The framework-3 stretch occupies residues 61 to 92 (GIPARFSGSGSRTDFTLTINPVEADDVATYYC). The complementarity-determining-3 stretch occupies residues 93 to 101 (QQSNEDPYT). The tract at residues 102–111 (FGGGTKLEIK) is framework-4.

This chain is Ig kappa chain V-III region PC 3741/TEPC 111, found in Mus musculus (Mouse).